Consider the following 428-residue polypeptide: Delta-aminolevulinic acid dehydratase, chloroplastic (428 aa).

The active-site Schiff-base intermediate with substrate is lysine 294. 5-aminolevulinate contacts are provided by arginine 304 and lysine 316. Glutamate 332 contacts Mg(2+). Lysine 347 (schiff-base intermediate with substrate) is an active-site residue. Residues serine 373 and tyrosine 412 each coordinate 5-aminolevulinate.

Belongs to the ALAD family. In terms of assembly, homooctamer. Mg(2+) is required as a cofactor.

The protein localises to the plastid. It is found in the chloroplast. It carries out the reaction 2 5-aminolevulinate = porphobilinogen + 2 H2O + H(+). It functions in the pathway porphyrin-containing compound metabolism; protoporphyrin-IX biosynthesis; coproporphyrinogen-III from 5-aminolevulinate: step 1/4. In terms of biological role, catalyzes an early step in the biosynthesis of tetrapyrroles. Binds two molecules of 5-aminolevulinate per subunit, each at a distinct site, and catalyzes their condensation to form porphobilinogen. In Hordeum vulgare (Barley), this protein is Delta-aminolevulinic acid dehydratase, chloroplastic (HEMB).